The primary structure comprises 307 residues: Acetyl-coenzyme A carboxylase carboxyl transferase subunit beta (307 aa).

The disordered stretch occupies residues 1–21; that stretch reads MAMADQRNDKPGRPAAQRERR. In terms of domain architecture, CoA carboxyltransferase N-terminal spans 43 to 307; the sequence is LWVKCPETGE…MGRERLSPAA (265 aa).

This sequence belongs to the AccD/PCCB family. Acetyl-CoA carboxylase is a heterohexamer composed of biotin carboxyl carrier protein (AccB), biotin carboxylase (AccC) and two subunits each of ACCase subunit alpha (AccA) and ACCase subunit beta (AccD).

It localises to the cytoplasm. The enzyme catalyses N(6)-carboxybiotinyl-L-lysyl-[protein] + acetyl-CoA = N(6)-biotinyl-L-lysyl-[protein] + malonyl-CoA. It functions in the pathway lipid metabolism; malonyl-CoA biosynthesis; malonyl-CoA from acetyl-CoA: step 1/1. Component of the acetyl coenzyme A carboxylase (ACC) complex. Biotin carboxylase (BC) catalyzes the carboxylation of biotin on its carrier protein (BCCP) and then the CO(2) group is transferred by the transcarboxylase to acetyl-CoA to form malonyl-CoA. The protein is Acetyl-coenzyme A carboxylase carboxyl transferase subunit beta of Phenylobacterium zucineum (strain HLK1).